The primary structure comprises 170 residues: Cytochrome b6-f complex subunit 4 (170 aa).

3 consecutive transmembrane segments (helical) span residues 46-66 (LLFM…GLSV), 105-125 (LLGI…PFIE), and 141-161 (TVFL…TLPL).

Belongs to the cytochrome b family. PetD subfamily. The 4 large subunits of the cytochrome b6-f complex are cytochrome b6, subunit IV (17 kDa polypeptide, PetD), cytochrome f and the Rieske protein, while the 4 small subunits are PetG, PetL, PetM and PetN. The complex functions as a dimer.

The protein resides in the cellular thylakoid membrane. Its function is as follows. Component of the cytochrome b6-f complex, which mediates electron transfer between photosystem II (PSII) and photosystem I (PSI), cyclic electron flow around PSI, and state transitions. The sequence is that of Cytochrome b6-f complex subunit 4 from Synechococcus sp. (strain JA-2-3B'a(2-13)) (Cyanobacteria bacterium Yellowstone B-Prime).